The primary structure comprises 285 residues: Inositol oxygenase (285 aa).

Arginine 29 serves as a coordination point for substrate. Serine 33 carries the post-translational modification Phosphoserine. 85–87 contributes to the substrate binding site; the sequence is DES. Fe cation contacts are provided by histidine 98, histidine 123, and aspartate 124. Residues lysine 127 and 141–142 contribute to the substrate site; that span reads GD. The Fe cation site is built by histidine 194, histidine 220, and aspartate 253. A substrate-binding site is contributed by 220–221; the sequence is HS.

It belongs to the myo-inositol oxygenase family. The cofactor is Fe cation. As to expression, kidney specific.

It localises to the cytoplasm. The enzyme catalyses myo-inositol + O2 = D-glucuronate + H2O + H(+). It participates in polyol metabolism; myo-inositol degradation into D-glucuronate; D-glucuronate from myo-inositol: step 1/1. This is Inositol oxygenase (Miox) from Rattus norvegicus (Rat).